A 211-amino-acid chain; its full sequence is UPF0056 membrane protein YvbG (211 aa).

A run of 6 helical transmembrane segments spans residues 1–21 (MMFSFIVHVFISLFAVSNPIG), 47–67 (ILSFFILAAFLVFGHLIFKLF), 69–89 (INIHALRVAGGIFIFGIAYNL), 114–134 (ISVTPLSIPIIAGPGTIATVM), 150–170 (MIGIAAVIALTFLFFHYSAFI), and 188–208 (LILAVVAVGMIGAGLKGMFPV).

It belongs to the UPF0056 (MarC) family.

The protein localises to the cell membrane. This is UPF0056 membrane protein YvbG (yvbG) from Bacillus subtilis (strain 168).